The following is a 616-amino-acid chain: Chaperone protein HscA homolog (616 aa).

This sequence belongs to the heat shock protein 70 family.

Functionally, chaperone involved in the maturation of iron-sulfur cluster-containing proteins. Has a low intrinsic ATPase activity which is markedly stimulated by HscB. In Mannheimia succiniciproducens (strain KCTC 0769BP / MBEL55E), this protein is Chaperone protein HscA homolog.